A 509-amino-acid chain; its full sequence is Galactose-1-phosphate uridylyltransferase (509 aa).

Belongs to the galactose-1-phosphate uridylyltransferase type 2 family.

It localises to the cytoplasm. The enzyme catalyses alpha-D-galactose 1-phosphate + UDP-alpha-D-glucose = alpha-D-glucose 1-phosphate + UDP-alpha-D-galactose. It functions in the pathway carbohydrate metabolism; galactose metabolism. This Fusobacterium nucleatum subsp. nucleatum (strain ATCC 25586 / DSM 15643 / BCRC 10681 / CIP 101130 / JCM 8532 / KCTC 2640 / LMG 13131 / VPI 4355) protein is Galactose-1-phosphate uridylyltransferase.